Consider the following 383-residue polypeptide: Probable aspartate/prephenate aminotransferase (383 aa).

Positions 39, 125, and 175 each coordinate L-aspartate. Lys-234 carries the N6-(pyridoxal phosphate)lysine modification. Arg-361 contributes to the L-aspartate binding site.

The protein belongs to the class-I pyridoxal-phosphate-dependent aminotransferase family. As to quaternary structure, homodimer. Pyridoxal 5'-phosphate serves as cofactor.

It localises to the cytoplasm. It catalyses the reaction L-aspartate + 2-oxoglutarate = oxaloacetate + L-glutamate. It carries out the reaction L-arogenate + oxaloacetate = prephenate + L-aspartate. In terms of biological role, catalyzes the reversible conversion of aspartate and 2-oxoglutarate to glutamate and oxaloacetate. Can also transaminate prephenate in the presence of aspartate. This Thermus aquaticus protein is Probable aspartate/prephenate aminotransferase (aspC).